A 137-amino-acid polypeptide reads, in one-letter code: Thioredoxin-like protein R548 (137 aa).

The Thioredoxin domain maps to 2–137 (SKDSVETNTI…LEKSIVESSQ (136 aa)). Residues cysteine 61 and cysteine 64 each act as nucleophile in the active site. Cysteines 61 and 64 form a disulfide.

This sequence belongs to the thioredoxin family.

In terms of biological role, participates in various redox reactions through the reversible oxidation of its active center dithiol to a disulfide and catalyzes dithiol-disulfide exchange reactions. The protein is Thioredoxin-like protein R548 of Acanthamoeba polyphaga mimivirus (APMV).